Reading from the N-terminus, the 459-residue chain is MLKIYNTLKREKEEFKPINPNQVGMYVCGVTVYDLCHFGHGRTFVSFDVIARYLRYLGYNLRYVRNITDVDDKIIKRALENNETCDQLVDRMIAEMHKDFDDLNILRPDVEPRATKHIPEIVAMVEKLIANGHAYVAADGDVMFDVESFKKYGALSRQNLEQLQAGARVEIKSVKKNPMDFVLWKMSKEGEPSWQSPWGNGRPGWHIECSAMNSKELGEHFDIHGGGSDLMFPHHENEIAQSCCAHGGDYVNYWLHTGMLTIDDEKMSKSLGNFFTIRTMLEKYESETLRYFFLTAHYRSLLNYSLNNLDLARSALERLYTSLRGCDLSVEVAGGEQYVEAFKAAMDDDFNTPGALAVLFEIAREVNKLKTEDMAKANGLAVRLKELAGVLGLLYQDPEAFLQGDADNDEVAEIEALIKQRNEAKAAKNWAVADEVRDKLKAMNIVLEDTPNGTTWRKA.

Cys-28 contacts Zn(2+). The short motif at 30–40 (VTVYDLCHFGH) is the 'HIGH' region element. Residues Cys-209, His-234, and Glu-238 each coordinate Zn(2+). A 'KMSKS' region motif is present at residues 266-270 (KMSKS). Lys-269 lines the ATP pocket.

This sequence belongs to the class-I aminoacyl-tRNA synthetase family. In terms of assembly, monomer. It depends on Zn(2+) as a cofactor.

Its subcellular location is the cytoplasm. It carries out the reaction tRNA(Cys) + L-cysteine + ATP = L-cysteinyl-tRNA(Cys) + AMP + diphosphate. The chain is Cysteine--tRNA ligase from Actinobacillus pleuropneumoniae serotype 3 (strain JL03).